Consider the following 1270-residue polypeptide: Breakpoint cluster region protein (1270 aa).

Residues 28 to 55 (VGDIEQELERCKASIRRLEQEVNQERFR) are a coiled coil. 4 disordered regions span residues 67 to 173 (KKSY…SADA), 201 to 249 (ISSL…DYED), 295 to 396 (KSPL…RHRQ), and 412 to 484 (TGQI…LEPT). Residues 126-139 (GRPATARRPAAAAP) show a composition bias toward low complexity. 2 positions are modified to phosphoserine: Ser-216 and Ser-237. Tyr-247 is subject to Phosphotyrosine. 2 stretches are compositionally biased toward low complexity: residues 348-358 (SSGQSSRVSPS) and 371-384 (SPSQ…DSSS). Residues Ser-358, Ser-379, and Ser-384 each carry the phosphoserine modification. Thr-387 is subject to Phosphothreonine. A phosphoserine mark is found at Ser-461 and Ser-465. Residue Arg-473 is modified to Omega-N-methylarginine. Phosphoserine occurs at positions 475 and 487. Residues 497 to 690 (MRKWVLSGIL…QNFLSSINEE (194 aa)) enclose the DH domain. Tyr-553 is subject to Phosphotyrosine. At Thr-640 the chain carries Phosphothreonine. Tyr-643 is modified (phosphotyrosine). Thr-692 carries the phosphothreonine modification. The PH domain maps to 707-865 (QLLKDSFMVE…WRESIREQQK (159 aa)). The C2 domain occupies 892 to 1019 (HHIPLTINKE…QDRDWQRTVI (128 aa)). Residues 1053–1247 (VKIAVVTKRE…VMSQVQVLLY (195 aa)) form the Rho-GAP domain. Ser-1263 is modified (phosphoserine).

In terms of assembly, homotetramer. Interacts with PDZK1. May interact with CCPG1. Interacts with HCK, FES/FPS, ABL1, PIK3R1 and GRB2. Interacts with SH2D5. Interacts with DLG4. Autophosphorylated. Phosphorylated by FES/FPS on tyrosine residues, leading to down-regulation of the BCR kinase activity. Phosphorylation by HCK is important for interaction with GRB2. As to expression, expressed in brain, including the cortex, hippocampus, cerebellum, and brainstem, as well as the spinal cord (at protein level).

The protein resides in the postsynaptic density. The protein localises to the cell projection. It is found in the dendritic spine. It localises to the axon. Its subcellular location is the synapse. It carries out the reaction L-seryl-[protein] + ATP = O-phospho-L-seryl-[protein] + ADP + H(+). It catalyses the reaction L-threonyl-[protein] + ATP = O-phospho-L-threonyl-[protein] + ADP + H(+). Protein with a unique structure having two opposing regulatory activities toward small GTP-binding proteins. The C-terminus is a GTPase-activating protein (GAP) domain which stimulates GTP hydrolysis by RAC1, RAC2 and CDC42. Accelerates the intrinsic rate of GTP hydrolysis of RAC1 or CDC42, leading to down-regulation of the active GTP-bound form. The central Dbl homology (DH) domain functions as guanine nucleotide exchange factor (GEF) that modulates the GTPases CDC42, RHOA and RAC1. Promotes the conversion of CDC42, RHOA and RAC1 from the GDP-bound to the GTP-bound form. The amino terminus contains an intrinsic kinase activity. Functions as an important negative regulator of neuronal RAC1 activity. Regulates macrophage functions such as CSF1-directed motility and phagocytosis through the modulation of RAC1 activity. Plays a major role as a RHOA GEF in keratinocytes being involved in focal adhesion formation and keratinocyte differentiation. In Rattus norvegicus (Rat), this protein is Breakpoint cluster region protein.